A 156-amino-acid chain; its full sequence is Ribonuclease H (156 aa).

In terms of domain architecture, RNase H type-1 spans 3–144 (ELKLIHIFTD…CDVLARTAAE (142 aa)). Positions 12, 50, 72, and 136 each coordinate Mg(2+).

It belongs to the RNase H family. As to quaternary structure, monomer. The cofactor is Mg(2+).

Its subcellular location is the cytoplasm. The catalysed reaction is Endonucleolytic cleavage to 5'-phosphomonoester.. Its function is as follows. Endonuclease that specifically degrades the RNA of RNA-DNA hybrids. In Shewanella baltica (strain OS223), this protein is Ribonuclease H.